The primary structure comprises 435 residues: tRNA modification GTPase MnmE (435 aa).

3 residues coordinate (6S)-5-formyl-5,6,7,8-tetrahydrofolate: Arg24, Glu82, and Lys122. The TrmE-type G domain occupies 219-360 (GFIIAIAGPP…LIAEMERRLG (142 aa)). Residue Asn229 coordinates K(+). GTP is bound by residues 229–234 (NAGKST), 248–254 (SPVPGTT), and 273–276 (DTAG). Ser233 lines the Mg(2+) pocket. The K(+) site is built by Ser248, Val250, and Thr253. Residue Thr254 coordinates Mg(2+). A (6S)-5-formyl-5,6,7,8-tetrahydrofolate-binding site is contributed by Lys435.

This sequence belongs to the TRAFAC class TrmE-Era-EngA-EngB-Septin-like GTPase superfamily. TrmE GTPase family. In terms of assembly, homodimer. Heterotetramer of two MnmE and two MnmG subunits. It depends on K(+) as a cofactor.

Its subcellular location is the cytoplasm. Exhibits a very high intrinsic GTPase hydrolysis rate. Involved in the addition of a carboxymethylaminomethyl (cmnm) group at the wobble position (U34) of certain tRNAs, forming tRNA-cmnm(5)s(2)U34. The protein is tRNA modification GTPase MnmE of Azorhizobium caulinodans (strain ATCC 43989 / DSM 5975 / JCM 20966 / LMG 6465 / NBRC 14845 / NCIMB 13405 / ORS 571).